The primary structure comprises 480 residues: Cysteine--tRNA ligase (480 aa).

Position 29 (Cys29) interacts with Zn(2+). Positions 31–41 match the 'HIGH' region motif; the sequence is ITVYDYCHLGH. Zn(2+) contacts are provided by Cys215, His240, and Glu244. The short motif at 272 to 276 is the 'KMSKS' region element; sequence KMSKS. Lys275 is an ATP binding site.

Belongs to the class-I aminoacyl-tRNA synthetase family. As to quaternary structure, monomer. Zn(2+) is required as a cofactor.

Its subcellular location is the cytoplasm. The enzyme catalyses tRNA(Cys) + L-cysteine + ATP = L-cysteinyl-tRNA(Cys) + AMP + diphosphate. In Microcystis aeruginosa (strain NIES-843 / IAM M-2473), this protein is Cysteine--tRNA ligase.